A 156-amino-acid polypeptide reads, in one-letter code: ATP synthase subunit b (156 aa).

Residues 7 to 27 traverse the membrane as a helical segment; that stretch reads LIGQAIWFALFVFFCMKFVWP.

This sequence belongs to the ATPase B chain family. In terms of assembly, F-type ATPases have 2 components, F(1) - the catalytic core - and F(0) - the membrane proton channel. F(1) has five subunits: alpha(3), beta(3), gamma(1), delta(1), epsilon(1). F(0) has three main subunits: a(1), b(2) and c(10-14). The alpha and beta chains form an alternating ring which encloses part of the gamma chain. F(1) is attached to F(0) by a central stalk formed by the gamma and epsilon chains, while a peripheral stalk is formed by the delta and b chains.

Its subcellular location is the cell inner membrane. Its function is as follows. F(1)F(0) ATP synthase produces ATP from ADP in the presence of a proton or sodium gradient. F-type ATPases consist of two structural domains, F(1) containing the extramembraneous catalytic core and F(0) containing the membrane proton channel, linked together by a central stalk and a peripheral stalk. During catalysis, ATP synthesis in the catalytic domain of F(1) is coupled via a rotary mechanism of the central stalk subunits to proton translocation. Component of the F(0) channel, it forms part of the peripheral stalk, linking F(1) to F(0). The polypeptide is ATP synthase subunit b (Alcanivorax borkumensis (strain ATCC 700651 / DSM 11573 / NCIMB 13689 / SK2)).